We begin with the raw amino-acid sequence, 907 residues long: Protein translocase subunit SecA (907 aa).

ATP is bound by residues Q87, 105–109 (GEGKT), and D510. The Zn(2+) site is built by C892, C894, C903, and H904.

It belongs to the SecA family. In terms of assembly, monomer and homodimer. Part of the essential Sec protein translocation apparatus which comprises SecA, SecYEG and auxiliary proteins SecDF-YajC and YidC. The cofactor is Zn(2+).

It is found in the cell inner membrane. The protein resides in the cytoplasm. It carries out the reaction ATP + H2O + cellular proteinSide 1 = ADP + phosphate + cellular proteinSide 2.. Functionally, part of the Sec protein translocase complex. Interacts with the SecYEG preprotein conducting channel. Has a central role in coupling the hydrolysis of ATP to the transfer of proteins into and across the cell membrane, serving both as a receptor for the preprotein-SecB complex and as an ATP-driven molecular motor driving the stepwise translocation of polypeptide chains across the membrane. This chain is Protein translocase subunit SecA, found in Acinetobacter baumannii (strain AB0057).